We begin with the raw amino-acid sequence, 365 residues long: MAVTKTIVVLPGDHVGQEITEEAIKVLNAIQECRPDKVNFKFDHHLIGGAAIDATGVPLPDEALEASKKADAVLLGAVGGPKWGTGAVRPEQGLLKIRKELQLYANLRPCNFASDSLLDLSPLKPEIARGTDFVVVRELVGGIYFGERKEDEGDGVAWDSEKYSVPEVQRITRMAAFMALQHNPPLPIWSLDKANVLASSRLWRKTVEETIKNEFPQLTVQHQLIDSAAMILVKNPTHLNGIIITNNMFGDIISDEASVIPGSLGLLPSASLASLPDKNTAFGLYEPCHGSAPDLPKGKVNPVATILSAAMMLKLSLDLFEEGEIIEQAVKKVLDSGIRTADLKGTNSTTEVGDAVAKAVRELLA.

80 to 91 (GPKWGTGAVRPE) provides a ligand contact to NAD(+). The substrate site is built by arginine 98, arginine 108, arginine 137, and aspartate 226. Residues aspartate 226, aspartate 251, and aspartate 255 each coordinate Mg(2+). 290–301 (GSAPDLPKGKVN) is a binding site for NAD(+).

This sequence belongs to the isocitrate and isopropylmalate dehydrogenases family. Homodimer. Requires Mg(2+) as cofactor. Mn(2+) is required as a cofactor.

Its subcellular location is the cytoplasm. It carries out the reaction (2R,3S)-3-isopropylmalate + NAD(+) = 4-methyl-2-oxopentanoate + CO2 + NADH. It participates in amino-acid biosynthesis; L-leucine biosynthesis; L-leucine from 3-methyl-2-oxobutanoate: step 3/4. Its function is as follows. Catalyzes the oxidation of 3-carboxy-2-hydroxy-4-methylpentanoate (3-isopropylmalate) to 3-carboxy-4-methyl-2-oxopentanoate. The product decarboxylates to 4-methyl-2 oxopentanoate. This is 3-isopropylmalate dehydrogenase (LEU2) from Candida glabrata (strain ATCC 2001 / BCRC 20586 / JCM 3761 / NBRC 0622 / NRRL Y-65 / CBS 138) (Yeast).